A 229-amino-acid chain; its full sequence is Predicted GPI-anchored protein 19 (229 aa).

A signal peptide spans 1–20 (MFSTTSIVLWFTILLPVTLP). Residues 63–92 (DNEQVLRKSKKKKKTTSTGTPGNENTTDFA) are disordered. A compositionally biased stretch (polar residues) spans 81 to 92 (GTPGNENTTDFA). Residues Asn-87, Asn-184, and Asn-189 are each glycosylated (N-linked (GlcNAc...) asparagine). Residue Gly-208 is the site of GPI-anchor amidated glycine attachment. The propeptide at 209 to 229 (FGSLIPYNSFYLYILLFCIIF) is removed in mature form.

It localises to the cell membrane. In terms of biological role, predicted GPI-anchored protein which may have a role during host infection. The chain is Predicted GPI-anchored protein 19 (PGA19) from Candida albicans (strain SC5314 / ATCC MYA-2876) (Yeast).